Here is a 298-residue protein sequence, read N- to C-terminus: Ethanolamine ammonia-lyase small subunit (298 aa).

Residues 15–43 (ASMGQDVPQPVAPSTQEGAKPQRAAPTAT) form a disordered region. Val-210, Glu-231, and Cys-261 together coordinate adenosylcob(III)alamin.

Belongs to the EutC family. As to quaternary structure, the basic unit is a heterodimer which dimerizes to form tetramers. The heterotetramers trimerize; 6 large subunits form a core ring with 6 small subunits projecting outwards. Adenosylcob(III)alamin serves as cofactor.

It is found in the bacterial microcompartment. It catalyses the reaction ethanolamine = acetaldehyde + NH4(+). It functions in the pathway amine and polyamine degradation; ethanolamine degradation. In terms of biological role, catalyzes the deamination of various vicinal amino-alcohols to oxo compounds. Allows this organism to utilize ethanolamine as the sole source of nitrogen and carbon in the presence of external vitamin B12. The polypeptide is Ethanolamine ammonia-lyase small subunit (Salmonella arizonae (strain ATCC BAA-731 / CDC346-86 / RSK2980)).